A 511-amino-acid chain; its full sequence is GMP synthase [glutamine-hydrolyzing] (511 aa).

The Glutamine amidotransferase type-1 domain maps to 5–195 (AILVLDFGSQ…VFKICQAQIN (191 aa)). The Nucleophile role is filled by C82. Active-site residues include H169 and E171. The GMPS ATP-PPase domain occupies 196–386 (WSLEGNLETI…LGIKKESLYR (191 aa)). Position 223 to 229 (223 to 229 (SGGTDSL)) interacts with ATP.

As to quaternary structure, homodimer.

The catalysed reaction is XMP + L-glutamine + ATP + H2O = GMP + L-glutamate + AMP + diphosphate + 2 H(+). It participates in purine metabolism; GMP biosynthesis; GMP from XMP (L-Gln route): step 1/1. Functionally, catalyzes the synthesis of GMP from XMP. The chain is GMP synthase [glutamine-hydrolyzing] (guaA) from Borreliella burgdorferi (strain N40) (Borrelia burgdorferi).